A 284-amino-acid chain; its full sequence is Diaminopimelate epimerase (284 aa).

Substrate contacts are provided by Asn20, Gln53, and Asn73. The active-site Proton donor is Cys82. Residues 83–84, Asn167, Asn200, and 218–219 contribute to the substrate site; these read GN and ER. Cys227 acts as the Proton acceptor in catalysis. 228-229 lines the substrate pocket; it reads GS.

This sequence belongs to the diaminopimelate epimerase family. Homodimer.

The protein localises to the cytoplasm. It catalyses the reaction (2S,6S)-2,6-diaminopimelate = meso-2,6-diaminopimelate. Its pathway is amino-acid biosynthesis; L-lysine biosynthesis via DAP pathway; DL-2,6-diaminopimelate from LL-2,6-diaminopimelate: step 1/1. In terms of biological role, catalyzes the stereoinversion of LL-2,6-diaminopimelate (L,L-DAP) to meso-diaminopimelate (meso-DAP), a precursor of L-lysine and an essential component of the bacterial peptidoglycan. The protein is Diaminopimelate epimerase of Xanthomonas campestris pv. campestris (strain ATCC 33913 / DSM 3586 / NCPPB 528 / LMG 568 / P 25).